The primary structure comprises 126 residues: uncharacterized protein (126 aa).

This is an uncharacterized protein from Mycoplasmopsis pulmonis (strain UAB CTIP) (Mycoplasma pulmonis).